The sequence spans 360 residues: Phospho-N-acetylmuramoyl-pentapeptide-transferase (360 aa).

Transmembrane regions (helical) follow at residues 3 to 23, 52 to 72, 81 to 101, 115 to 135, 153 to 173, 187 to 207, 230 to 250, 254 to 274, 282 to 302, and 333 to 353; these read SILV…PYLI, MGGV…HLTV, GLLV…DDFI, AKLV…MQFA, ITVI…AISG, LAGG…FWQF, IALV…WNAA, IFMG…LSMV, IIIG…IVVF, and FWVL…ADWL.

The protein belongs to the glycosyltransferase 4 family. MraY subfamily. Mg(2+) is required as a cofactor.

It localises to the cell membrane. It catalyses the reaction UDP-N-acetyl-alpha-D-muramoyl-L-alanyl-gamma-D-glutamyl-meso-2,6-diaminopimeloyl-D-alanyl-D-alanine + di-trans,octa-cis-undecaprenyl phosphate = di-trans,octa-cis-undecaprenyl diphospho-N-acetyl-alpha-D-muramoyl-L-alanyl-D-glutamyl-meso-2,6-diaminopimeloyl-D-alanyl-D-alanine + UMP. It functions in the pathway cell wall biogenesis; peptidoglycan biosynthesis. In terms of biological role, catalyzes the initial step of the lipid cycle reactions in the biosynthesis of the cell wall peptidoglycan: transfers peptidoglycan precursor phospho-MurNAc-pentapeptide from UDP-MurNAc-pentapeptide onto the lipid carrier undecaprenyl phosphate, yielding undecaprenyl-pyrophosphoryl-MurNAc-pentapeptide, known as lipid I. This is Phospho-N-acetylmuramoyl-pentapeptide-transferase from Saccharopolyspora erythraea (strain ATCC 11635 / DSM 40517 / JCM 4748 / NBRC 13426 / NCIMB 8594 / NRRL 2338).